Reading from the N-terminus, the 335-residue chain is MWIHFAPLRIPFSRRLQTVAVLQWAVSFLAMAQCCIALYILLLFSRYWFLALLYGVWLYLDWDTPSKGGRRSNWVRSWIVWKYFAEYFPIKLLCTAPLDPKYNYIMGFHPHGVLVVGAFGNFCTEGTGFSRLFPGLTPHLLMLPAWFRVPFFREYIMSGSLVSSDRSSAHYLLSQKSGGQALVIAVGGPPEALDAKPGELTLQLLNRTGFIKMALTHGAHLVPVLSFGENDLYNQVNNPRGSLLRTTQEKLQKVLGIALPLFHGRGVFQYSWGLLPHRRPIYTVVGSPIPVAKTPCPTQEQISSLHALYVAKLRELYTTHKGNYGIPRDRSLVLC.

2 helical membrane-spanning segments follow: residues 24 to 44 and 104 to 124; these read WAVSFLAMAQCCIALYILLLF and YIMGFHPHGVLVVGAFGNFCT. N206 is a glycosylation site (N-linked (GlcNAc...) asparagine).

This sequence belongs to the diacylglycerol acyltransferase family.

Its subcellular location is the endoplasmic reticulum membrane. It is found in the cytoplasm. The protein resides in the perinuclear region. It catalyses the reaction a 2-acylglycerol + an acyl-CoA = a 1,2-diacylglycerol + CoA. The catalysed reaction is a 2-acylglycerol + an acyl-CoA = a 1,2-diacyl-sn-glycerol + CoA. It carries out the reaction a 2-acylglycerol + an acyl-CoA = a 2,3-diacyl-sn-glycerol + CoA. The enzyme catalyses a 1-acylglycerol + an acyl-CoA = a 1,2-diacylglycerol + CoA. It catalyses the reaction a 1-acylglycerol + an acyl-CoA = a 1,3-diacylglycerol + CoA. The catalysed reaction is 1-O-alkylglycerol + an acyl-CoA = 1-O-alkyl-3-acylglycerol + CoA. It carries out the reaction an acyl-CoA + a 1,2-diacyl-sn-glycerol = a triacyl-sn-glycerol + CoA. It functions in the pathway glycerolipid metabolism; triacylglycerol biosynthesis. Its function is as follows. Catalyzes the formation of diacylglycerol from 2-monoacylglycerol and fatty acyl-CoA. In terms of biological role, involved in glycerolipid synthesis and lipid metabolism. Catalyzes the formation of diacylglycerol, the precursor of triacylglycerol, by transferring the acyl chain of a fatty acyl-CoA to a monoacylglycerol. Plays a central role in absorption of dietary fat in the small intestine by catalyzing the resynthesis of triacylglycerol in enterocytes. Has a preference toward monoacylglycerols containing unsaturated fatty acids in an order of C18:3 &gt; C18:2 &gt; C18:1 &gt; C18:0 at sn-2. Able to use 1-monoalkylglycerol (1-MAkG, 1-O-alkylglycerol) as an acyl acceptor for the synthesis of monoalkyl-monoacylglycerol (MAMAG, 1-O-alkyl-3-acylglycerol or 1-O-alkyl-2-acylglycerol) and subsequently, with lower efficiency, may add another acyl chain producing monoalkyl-diacylglycerol (MADAG, 1-O-alkyl-2,3-diacylglycerol). Possesses weak but significant activity with diacylglycerol as substrate, producing triacylglycerol (triacyl-sn-glycerol). The chain is 2-acylglycerol O-acyltransferase 2-B (mogat2-b) from Xenopus laevis (African clawed frog).